The chain runs to 255 residues: dTDP-3-amino-3,6-dideoxy-alpha-D-glucopyranose N,N-dimethyltransferase (255 aa).

S-adenosyl-L-methionine contacts are provided by residues Tyr14, Tyr22, Tyr33, Ala58, 58 to 59 (AC), Glu79, 101 to 102 (DM), and Met117.

Belongs to the methyltransferase TylM1/DesVI family. In terms of assembly, homodimer.

It catalyses the reaction dTDP-3-amino-3,6-dideoxy-alpha-D-glucose + 2 S-adenosyl-L-methionine = dTDP-alpha-D-mycaminose + 2 S-adenosyl-L-homocysteine + 2 H(+). It participates in antibiotic biosynthesis; tylosin biosynthesis. Its function is as follows. S-adenosyl-L-methionine-dependent methyltransferase involved in the biosynthesis of mycaminose, an essential structural component of the macrolide antibiotic tylosin. Involved in the last step in mycaminose biosynthesis by mediating dimethylation of the hexose C-3' amino group. This Streptomyces fradiae (Streptomyces roseoflavus) protein is dTDP-3-amino-3,6-dideoxy-alpha-D-glucopyranose N,N-dimethyltransferase (tylM1).